Here is a 702-residue protein sequence, read N- to C-terminus: Vacuolar protein sorting-associated protein 52 homolog (702 aa).

A coiled-coil region spans residues 505-535; that stretch reads KEMGAKMEAVLENSEDSIEQLLTRMSAMQQT.

This sequence belongs to the VPS52 family. As to quaternary structure, component of the Golgi-associated retrograde protein (GARP) complex, also called VFT (VPS fifty-three) complex, composed of vps-51, vps-52, vps-53 and vps-54. Within the complex interacts with vps-53 and vps-54. Interacts with the small GTPases rab-6.1 and rab-6.2. In terms of tissue distribution, ubiquitously expressed, with particularly strong expression in neuronal cells. Specifically expressed in head and tail neurons and in the pharynx and ventral cord motor neurons.

It is found in the golgi apparatus. It localises to the trans-Golgi network. The protein localises to the perikaryon. Its subcellular location is the cytoplasm. The protein resides in the perinuclear region. In terms of biological role, acts as a component of the GARP complex that is involved in retrograde transport from early and late endosomes to the trans-Golgi network (TGN). The GARP complex facilitates tethering as well as SNARE complex assembly at the Golgi. Plays a role in the trafficking of cargo to dense-core vesicles, probably through association with the EARP-interacting protein eipr-1. Important for neuronal function. In Caenorhabditis elegans, this protein is Vacuolar protein sorting-associated protein 52 homolog.